The sequence spans 1669 residues: MTAKPPPPIPPTLGGDDSGTHGPKLAPEIPRINSELAAQAALRGQQLLRKQGSQEQHATNTLPAHKTGAPPPLPPTQSRPVPAIPARGASDRAAPPEIPPKRHSLKSMPDGQPMMVPGLPPTMRQPPPLPRKPASTQSSAQNSAQSSPLAGMKFKDKPPPPPEKHSTLSAEGMAARRCSNPFEMPPPPPPLVLQSAVAALSEQSSKNGLNPVPSPAPTRASEAKKINQRSIASPTEEFGSEDALRGIESGLRNMERAMQEQMNLRNMEAAVQNNFDLSFKASLAAGARHLGGGSVNLRTANYERNLSLDEGRAGDSRQSLEELKQLRAQAQQQSLLNNSSSSSSNSQVEQSMRSTIEHHMRSLDRNLPLELQYSRHRFQNNLNAVAAAGGGGGNSSTGNAVANSGTSGSQQPPMPLSSEFREQIRQQLLGNIPPQVVHNMGQSPGSAAAAALLQHQAQSRAAAAAAAAAAAAAAAQVAAGSGALSREELRMRRRSSHDETQLTQNSSGGIQVTRLREHWDETSQCVLQRAAQLKNMLSDSQRFEAKRLELEKWLARMEQRAERMGTIATTADILEAQQKEQKSFHAELHQNKQHFDIFNELTQKLIAVYPNDDTTRIKKMTEVINQRYANLNSGVINRGKQLHAAVHSLQSFDRAMDQFLAFLSETETLCENAESDIERNPLMFKDLQSEIETHRVVYDRLDGTGRKLLGSLTSQEDAVMLQRRLDEMNQRWNNLKSKSIAIRNRLESNSEHWNALLLSLRELTEWVIRKDTELSTLGLGPVRGDAVSLQKQLDDHKAFRRQLEDKRPIVESNLTSGRQYIANEAAVSDTSDTEANHDSDSRYMSAEEQSRELTRSIRREVGKLSEQWNNLIDRSDNWKHRLDEYMTKMRQFQKILEDLSSRVALAEQTKTSWLPPSSVGEANEQMQQLQRLRDKMTTASALLDDCNEQQSFFTANQVLVPTPCLSKLEDLNTRMKLLQIAMDERQKVLCQAGAQQTHENGDDGRTTSNSGTIGPLPNLGQSVKPPWERATTAANVPYYIDHERETTHWDHPEMIELMKGLADLNEIRFSAYRTAMKLRSVQKRLALDRISMSTACESFDRHGLRAQNDKLIDIPDMTTVLHSLYVTIDKIDLTLMLDLAINWILNVYDSQRTGQIRVLSFKVGLVLLCKGHLEEKYRYLFRLVADTDRRADQRRLGLLLHDCIQVPRQLGEVAAFGGSNIEPSVRSCLEQAGISQEAIDGNQDISIELQHFLGWLQHEPQSLVWLPVLHRLAAAEAAKHQAKCNICKEYPIVGFRYRCLKCFNFDMCQKCFFFGRNAKNHKLTHPMHEYCTTTTSTEDVRDFTRALKNKFKSRKYFKKHPRVGYLPVQSVLEGDALESPAPSPQHTTHQLQNDMHSRLEMYASRLAQVEYGGTGSNSTPDSDDEHQLIAQYCQALPGTSNGSAPKSPVQVMAAMDAEQREELEAIIRDLEEENANLQAEYQQLCSKEQSGMPEDSNGMQHSSSSMTGLSGQGEQGQDMMAEAKLLRQHKGRLEARMQILEDHNRQLEAQLQRLRQLLDEPNGGGSSATSSGLPSAPGSALNSKPNTLQTRSVTASQLNTDSPAKMNQQNGHYEHNSKNSSGLVTVITEQELESINDDLEDSSSSNTTNTTTTTTTTATTEKTCVELQK.

The span at 1 to 11 (MTAKPPPPIPP) shows a compositional bias: pro residues. 5 disordered regions span residues 1-28 (MTAKPPPPIPPTLGGDDSGTHGPKLAPE), 43-243 (RGQQ…SEDA), 327-356 (RAQAQQQSLLNNSSSSSSNSQVEQSMRSTI), 389-417 (GGGGGNSSTGNAVANSGTSGSQQPPMPLS), and 481-508 (SGALSREELRMRRRSSHDETQLTQNSSG). The span at 53 to 62 (SQEQHATNTL) shows a compositional bias: polar residues. Pro residues predominate over residues 118–131 (GLPPTMRQPPPLPR). The span at 132–147 (KPASTQSSAQNSAQSS) shows a compositional bias: low complexity. Over residues 153-166 (KFKDKPPPPPEKHS) the composition is skewed to basic and acidic residues. Composition is skewed to low complexity over residues 328 to 347 (AQAQQQSLLNNSSSSSSNSQ) and 396 to 405 (STGNAVANSG). Residues 485 to 500 (SREELRMRRRSSHDET) are compositionally biased toward basic and acidic residues. 4 Spectrin repeats span residues 541-643 (QRFE…KQLH), 650-747 (QSFD…NRLE), 754-883 (NALL…HRLD), and 890-990 (RQFQ…KVLC). The segment at 827–851 (VSDTSDTEANHDSDSRYMSAEEQSR) is disordered. The interval 994–1024 (AQQTHENGDDGRTTSNSGTIGPLPNLGQSVK) is disordered. The WW domain occupies 1021 to 1054 (QSVKPPWERATTAANVPYYIDHERETTHWDHPEM). Residues 1279 to 1335 (KHQAKCNICKEYPIVGFRYRCLKCFNFDMCQKCFFFGRNAKNHKLTHPMHEYCTTTT) form a ZZ-type zinc finger. Positions 1284, 1287, 1299, 1302, 1308, 1311, 1321, and 1325 each coordinate Zn(2+). Serine 1379 is subject to Phosphoserine. Disordered regions lie at residues 1488–1516 (EQSGMPEDSNGMQHSSSSMTGLSGQGEQG) and 1559–1669 (DEPN…ELQK). Composition is skewed to polar residues over residues 1497-1509 (NGMQHSSSSMTGL) and 1580-1611 (ALNSKPNTLQTRSVTASQLNTDSPAKMNQQNG). Residues 1630–1641 (QELESINDDLED) are compositionally biased toward acidic residues. Low complexity predominate over residues 1642–1660 (SSSSNTTNTTTTTTTTATT).

Component of the dystrophin associated protein complex (DAPC). Interacts with Dg, via the Dg WW domain binding sites. As to expression, expressed in neuronally derived tissues, mainly the CNS and the brain of stage 16 embryos. Lower level expression is seen in the sensory organs. Expression is absent from the musculature. In larvae, expression is predominant throughout the neuropil and brain and in the eye antennal disks.

The protein localises to the cell membrane. The protein resides in the sarcolemma. Its subcellular location is the cytoplasm. It is found in the cytoskeleton. Required for the maintenance of appropriate synaptic retrograde communication and the stabilization of muscle cell architecture or physiology. May play a role in anchoring the cytoskeleton to the plasma membrane. In Drosophila melanogaster (Fruit fly), this protein is Dystrophin, isoform B (Dys).